The chain runs to 440 residues: D-serine dehydratase (440 aa).

Lys116 bears the N6-(pyridoxal phosphate)lysine mark.

Belongs to the serine/threonine dehydratase family. DsdA subfamily. As to quaternary structure, monomer. The cofactor is pyridoxal 5'-phosphate.

The catalysed reaction is D-serine = pyruvate + NH4(+). This chain is D-serine dehydratase, found in Salmonella typhi.